The primary structure comprises 1010 residues: Phosphatidylserine decarboxylase proenzyme 2 (1010 aa).

C2 domains follow at residues 1–114 (MSQA…SSWE) and 247–370 (DFES…DKPC). Ca(2+) is bound by residues Asp342, Ser345, and Asp348. The region spanning 458–493 (LRRQLWMHLLQGNDTQMKGTLDLIELNYFVDCLGSN) is the EF-hand domain. Residues Asp734, His793, and Ser880 each act as charge relay system; for autoendoproteolytic cleavage activity in the active site. The active-site Schiff-base intermediate with substrate; via pyruvic acid; for decarboxylase activity is the Ser880. Ser880 carries the post-translational modification Pyruvic acid (Ser); by autocatalysis.

It belongs to the phosphatidylserine decarboxylase family. PSD-B subfamily. Eukaryotic type II sub-subfamily. Heterodimer of a large membrane-associated beta subunit and a small pyruvoyl-containing alpha subunit. Interacts with pstB2. This interaction may be a means to structurally tether the donor membrane (ER) harboring PstB2 to acceptor membranes (Golgi/endosomes) harboring PSD2 during PtdSer transport to the site of PtdEtn synthesis. Pyruvate serves as cofactor. The cofactor is Ca(2+). Is synthesized initially as an inactive proenzyme. Formation of the active enzyme involves a self-maturation process in which the active site pyruvoyl group is generated from an internal serine residue via an autocatalytic post-translational modification. Two non-identical subunits are generated from the proenzyme in this reaction, and the pyruvate is formed at the N-terminus of the alpha chain, which is derived from the carboxyl end of the proenzyme. The autoendoproteolytic cleavage occurs by a canonical serine protease mechanism, in which the side chain hydroxyl group of the serine supplies its oxygen atom to form the C-terminus of the beta chain, while the remainder of the serine residue undergoes an oxidative deamination to produce ammonia and the pyruvoyl prosthetic group on the alpha chain. During this reaction, the Ser that is part of the protease active site of the proenzyme becomes the pyruvoyl prosthetic group, which constitutes an essential element of the active site of the mature decarboxylase.

It localises to the golgi apparatus membrane. The protein localises to the endosome membrane. The enzyme catalyses a 1,2-diacyl-sn-glycero-3-phospho-L-serine + H(+) = a 1,2-diacyl-sn-glycero-3-phosphoethanolamine + CO2. It participates in phospholipid metabolism; phosphatidylethanolamine biosynthesis; phosphatidylethanolamine from CDP-diacylglycerol: step 2/2. In terms of biological role, catalyzes the formation of phosphatidylethanolamine (PtdEtn) from phosphatidylserine (PtdSer). Plays a central role in phospholipid metabolism and in the interorganelle trafficking of phosphatidylserine. This is Phosphatidylserine decarboxylase proenzyme 2 from Komagataella phaffii (strain GS115 / ATCC 20864) (Yeast).